Reading from the N-terminus, the 857-residue chain is MAIQLRSLFPLALPGMLALLGWWWFFSRKKDRLSSSDKQVETLKVGPAIKDRRLSEEACPGVLSVAPTVTQPPGREEQRCVDKPSTEPLALPRTRQVRRRSESSGNLPSVADTRSQPGPCRDEIAKVELSLMGDKAKSIPLGCPLLPKDASFPYEAVERCKQESALGKTPGRGWPSPYAASGEKARETGGTEGTGDAVLGENVSEEGLLSQECVSEVEKSEFPILAPGGGEGEEVSHGPPQVAELLKKEEYIVGKLPSSFVEPVHSEPVKDEDALEPQVKGSSNTSDRDLAGELDKDETVPENDQIKQAAFQLISQVILEATEEFRATTVGKTVAQVHPTSATQPKGKEESCVPASQETSLGQDTSDPASTRTGATASPSAEALPPKTYVSCLSSPLSGPTKDQKPKNSAHHISLAPCPPPVTPQRQSLEGASNPRGDDNFVACMANNSQSVLSVSSLGQCSDPVSTSGLEDSCTETISSSGDKAMTPPLPVSTQPFSNGVLKEELSDLGTEDGWTMDTEADHSGGSDGNSMDSVDSCCGLTKPDSPQSVQAGSNPKKVDLIIWEIEVPKHLVGRLIGKQGRYVSFLKQTSGAKIYISTLPYTQNIQICHIEGSQHHVDKALNLIGKKFKELNLTNIYAPPLPSLALPSLPMTSWLMLPDGITVEVIVVNQVNAGHLFVQQHTHPTFHALRSLDQQMYLCYSQPGIPTLPTPVEITVICAAPGADGAWWRAQVVASYEETNEVEIRYVDYGGYKRVKVDVLRQIRSDFVTLPFQGAEVLLDSVVPLSDDDHFSPEADAAMSEMTGNTALLAQVTSYSATGLPLIQLWSVVGDEVVLINRSLVERGLAQWVDSYYASL.

The N-terminal 29 residues, 1–29, are a transit peptide targeting the mitochondrion; that stretch reads MAIQLRSLFPLALPGMLALLGWWWFFSRK. Ser-55 is subject to Phosphoserine. The segment at 65–121 is disordered; the sequence is VAPTVTQPPGREEQRCVDKPSTEPLALPRTRQVRRRSESSGNLPSVADTRSQPGPCR. Positions 74 to 85 are enriched in basic and acidic residues; that stretch reads GREEQRCVDKPS. Residues Ser-101, Ser-103, and Ser-164 each carry the phosphoserine modification. The span at 103-116 shows a compositional bias: polar residues; that stretch reads SSGNLPSVADTRSQ. Disordered stretches follow at residues 165-198 and 260-303; these read ALGKTPGRGWPSPYAASGEKARETGGTEGTGDAV and FVEP…VPEN. A compositionally biased stretch (basic and acidic residues) spans 286-299; that stretch reads SDRDLAGELDKDET. The segment at 306-319 is PKA-RII subunit binding domain; that stretch reads IKQAAFQLISQVIL. 3 disordered regions span residues 336 to 437, 466 to 497, and 512 to 554; these read QVHP…NPRG, STSGLEDSCTETISSSGDKAMTPPLPVSTQPF, and EDGW…QAGS. The span at 354 to 379 shows a compositional bias: polar residues; sequence PASQETSLGQDTSDPASTRTGATASP. Residue Thr-401 is modified to Phosphothreonine. Over residues 466 to 482 the composition is skewed to polar residues; that stretch reads STSGLEDSCTETISSSG. Thr-487 carries the post-translational modification Phosphothreonine. 2 positions are modified to phosphoserine: Ser-527 and Ser-546. A compositionally biased stretch (polar residues) spans 545–554; sequence DSPQSVQAGS. In terms of domain architecture, KH spans 561–625; it reads LIIWEIEVPK…HHVDKALNLI (65 aa). Residues 712–771 enclose the Tudor domain; it reads PVEITVICAAPGADGAWWRAQVVASYEETNEVEIRYVDYGGYKRVKVDVLRQIRSDFVTL.

Interacts with SLC8A3. Interacts with CFAP91. Interacts with CLPB. Interacts with NDUFS1. As to expression, highest expression in testis, heart, liver, skeletal muscle, intestine and kidney, followed by brain and lung. No expression in spleen. Isoform 1/D-AKAP1A is expressed predominantly in testis whereas isoform 4/D-AKAP1D is expressed primarily in liver. Expression is decreased in hearts of diabetic mice (at protein level).

Its subcellular location is the mitochondrion outer membrane. The protein localises to the mitochondrion. It is found in the endoplasmic reticulum. Functionally, differentially targeted protein that binds to type I and II regulatory subunits of protein kinase A. Anchors them to the cytoplasmic face of the mitochondrial outer membrane or allows them to reside in the endoplasmic reticulum. Involved in mitochondrial-mediated antiviral innate immunity. Promotes translocation of NDUFS1 into mitochondria to regulate mitochondrial membrane respiratory chain NADH dehydrogenase (Complex I) activity. Under diabetic conditions, myocardial AKAP1 expression decreases which blocks the translocation of NDUFS1 from the cytosol to mitochondria. Reduction of NDUFS1 in mitochondria decreases ATP production and increases mitochondrial ROS level, which causes mitochondrial dysfunction and cell apoptosis, respectively, thereby leading to cardiac dysfunction. This chain is A-kinase anchor protein 1, mitochondrial, found in Mus musculus (Mouse).